The sequence spans 406 residues: Peptidase T (406 aa).

His78 serves as a coordination point for Zn(2+). Residue Asp80 is part of the active site. Residue Asp139 coordinates Zn(2+). Glu173 (proton acceptor) is an active-site residue. Zn(2+)-binding residues include Glu174, Asp196, and His378.

This sequence belongs to the peptidase M20B family. Requires Zn(2+) as cofactor.

The protein resides in the cytoplasm. It carries out the reaction Release of the N-terminal residue from a tripeptide.. In terms of biological role, cleaves the N-terminal amino acid of tripeptides. The chain is Peptidase T from Clostridium perfringens (strain ATCC 13124 / DSM 756 / JCM 1290 / NCIMB 6125 / NCTC 8237 / Type A).